A 1092-amino-acid chain; its full sequence is Isoleucine--tRNA ligase (1092 aa).

Positions 53-63 (PFANGLPHYGH) match the 'HIGH' region motif. The short motif at 613–617 (KLSKR) is the 'KMSKS' region element. An ATP-binding site is contributed by Lys-616.

The protein belongs to the class-I aminoacyl-tRNA synthetase family. IleS type 2 subfamily. Monomer. Requires Zn(2+) as cofactor.

The protein resides in the cytoplasm. It catalyses the reaction tRNA(Ile) + L-isoleucine + ATP = L-isoleucyl-tRNA(Ile) + AMP + diphosphate. Its function is as follows. Catalyzes the attachment of isoleucine to tRNA(Ile). As IleRS can inadvertently accommodate and process structurally similar amino acids such as valine, to avoid such errors it has two additional distinct tRNA(Ile)-dependent editing activities. One activity is designated as 'pretransfer' editing and involves the hydrolysis of activated Val-AMP. The other activity is designated 'posttransfer' editing and involves deacylation of mischarged Val-tRNA(Ile). This Rickettsia conorii (strain ATCC VR-613 / Malish 7) protein is Isoleucine--tRNA ligase.